The chain runs to 263 residues: Endonuclease 8 (263 aa).

Catalysis depends on Pro-2, which acts as the Schiff-base intermediate with DNA. Catalysis depends on Glu-3, which acts as the Proton donor. The Proton donor; for beta-elimination activity role is filled by Lys-53. Residues Gln-70, Arg-125, and Asn-169 each coordinate DNA. The FPG-type zinc finger occupies Lys-229–His-263. Catalysis depends on Arg-253, which acts as the Proton donor; for delta-elimination activity.

This sequence belongs to the FPG family. It depends on Zn(2+) as a cofactor.

The enzyme catalyses 2'-deoxyribonucleotide-(2'-deoxyribose 5'-phosphate)-2'-deoxyribonucleotide-DNA = a 3'-end 2'-deoxyribonucleotide-(2,3-dehydro-2,3-deoxyribose 5'-phosphate)-DNA + a 5'-end 5'-phospho-2'-deoxyribonucleoside-DNA + H(+). Its function is as follows. Involved in base excision repair of DNA damaged by oxidation or by mutagenic agents. Acts as a DNA glycosylase that recognizes and removes damaged bases. Has a preference for oxidized pyrimidines, such as thymine glycol, 5,6-dihydrouracil and 5,6-dihydrothymine. Has AP (apurinic/apyrimidinic) lyase activity and introduces nicks in the DNA strand. Cleaves the DNA backbone by beta-delta elimination to generate a single-strand break at the site of the removed base with both 3'- and 5'-phosphates. The chain is Endonuclease 8 from Escherichia coli O157:H7.